The sequence spans 280 residues: Undecaprenyl-diphosphatase (280 aa).

8 helical membrane-spanning segments follow: residues Phe-19–Gly-39, Phe-44–Tyr-64, Phe-89–Ala-109, Ile-125–Gln-145, Val-156–Val-176, Ala-197–Ile-217, Val-226–Ile-246, and Gly-259–Ile-279.

It belongs to the UppP family.

The protein resides in the cell inner membrane. The catalysed reaction is di-trans,octa-cis-undecaprenyl diphosphate + H2O = di-trans,octa-cis-undecaprenyl phosphate + phosphate + H(+). Its function is as follows. Catalyzes the dephosphorylation of undecaprenyl diphosphate (UPP). Confers resistance to bacitracin. The protein is Undecaprenyl-diphosphatase of Leptospira borgpetersenii serovar Hardjo-bovis (strain L550).